The sequence spans 979 residues: Mast/stem cell growth factor receptor Kit (979 aa).

The signal sequence occupies residues 1 to 27 (MRGARGAWDFLCVLLLLLLLGVQTGSS). Residues 28-527 (QPSVSPGEPS…QIHPHTLFTP (500 aa)) lie on the Extracellular side of the membrane. Ig-like C2-type domains lie at 29-114 (PSVS…VFVR), 123-207 (DLPL…LKVR), 214-311 (PVVS…LEVV), 320-413 (PMMS…VYVN), and 416-510 (PEIL…FNFA). Cys60 and Cys99 form a disulfide bridge. N-linked (GlcNAc...) asparagine glycans are attached at residues Asn96, Asn132, and Asn147. Disulfide bonds link Cys138–Cys188, Cys153–Cys185, and Cys235–Cys293. N-linked (GlcNAc...) asparagine glycans are attached at residues Asn286, Asn296, Asn303, Asn355, Asn370, Asn403, Asn466, and Asn489. The cysteines at positions 431 and 494 are disulfide-linked. Residues 528 to 548 (LLIGFVIAAGMMCIIVMILTY) form a helical membrane-spanning segment. Over 549–979 (KYLQKPMYEV…TQPLLVHEDV (431 aa)) the chain is Cytoplasmic. A phosphotyrosine; by autocatalysis mark is found at Tyr550, Tyr556, Tyr571, and Tyr573. Tyr571 is a Mg(2+) binding site. The important for interaction with phosphotyrosine-binding proteins stretch occupies residues 571–573 (YVY). The 349-residue stretch at 592 to 940 (LSFGKTLGAG…ISDSTNHIYS (349 aa)) folds into the Protein kinase domain. Residues 599 to 606 (GAGAFGKV), Lys626, and 674 to 680 (EYCCYGD) contribute to the ATP site. Tyr706, Tyr724, and Tyr733 each carry phosphotyrosine; by autocatalysis. Phosphoserine; by PKC/PRKCA is present on residues Ser744 and Ser749. Asp795 serves as the catalytic Proton acceptor. Arg799 contributes to the ATP binding site. Asn800 and Asp813 together coordinate Mg(2+). Position 824 is a phosphoserine (Ser824). Residue Tyr826 is modified to Phosphotyrosine; by autocatalysis. Ser894 carries the phosphoserine modification. 2 positions are modified to phosphotyrosine; by autocatalysis: Tyr903 and Tyr939. Phosphoserine is present on Ser962.

Belongs to the protein kinase superfamily. Tyr protein kinase family. CSF-1/PDGF receptor subfamily. Monomer in the absence of bound KITLG/SCF. Homodimer in the presence of bound KITLG/SCF, forming a heterotetramer with two KITLG/SCF molecules. Interacts (via phosphorylated tyrosine residues) with the adapter proteins GRB2 and GRB7 (via SH2 domain), and SH2B2/APS. Interacts (via C-terminus) with MPDZ (via the tenth PDZ domain). Interacts (via phosphorylated tyrosine residues) with PIK3R1 and PIK3 catalytic subunit. Interacts (via phosphorylated tyrosine) with CRK (isoform Crk-II), FYN, SHC1 and MATK/CHK (via SH2 domain). Interacts with LYN and FES/FPS. Interacts (via phosphorylated tyrosine residues) with the protein phosphatases PTPN6/SHP-1 (via SH2 domain), PTPN11/SHP-2 (via SH2 domain) and PTPRU. Interacts with PLCG1. Interacts with DOK1 and TEC. Interacts with IL1RAP (independent of stimulation with KITLG/SCF). A mast cell-specific KITLG/SCF-induced interleukin-33 signaling complex contains IL1RL1, IL1RAP, KIT and MYD88. In terms of processing, ubiquitinated by SOCS6. KIT is rapidly ubiquitinated after autophosphorylation induced by KITLG/SCF binding, leading to internalization and degradation. Post-translationally, autophosphorylated on tyrosine residues. KITLG/SCF binding promotes autophosphorylation. Phosphorylated tyrosine residues are important for interaction with specific binding partners.

Its subcellular location is the cell membrane. The enzyme catalyses L-tyrosyl-[protein] + ATP = O-phospho-L-tyrosyl-[protein] + ADP + H(+). Its activity is regulated as follows. Present in an inactive conformation in the absence of bound ligand. KITLG/SCF binding leads to dimerization and activation by autophosphorylation on tyrosine residues. Activity is down-regulated by PRKCA-mediated phosphorylation on serine residues. Functionally, tyrosine-protein kinase that acts as a cell-surface receptor for the cytokine KITLG/SCF and plays an essential role in the regulation of cell survival and proliferation, hematopoiesis, stem cell maintenance, gametogenesis, mast cell development, migration and function, and in melanogenesis. In response to KITLG/SCF binding, KIT can activate several signaling pathways. Phosphorylates PIK3R1, PLCG1, SH2B2/APS and CBL. Activates the AKT1 signaling pathway by phosphorylation of PIK3R1, the regulatory subunit of phosphatidylinositol 3-kinase. Activated KIT also transmits signals via GRB2 and activation of RAS, RAF1 and the MAP kinases MAPK1/ERK2 and/or MAPK3/ERK1. Promotes activation of STAT family members STAT1, STAT3, STAT5A and STAT5B. Activation of PLCG1 leads to the production of the cellular signaling molecules diacylglycerol and inositol 1,4,5-trisphosphate. KIT signaling is modulated by protein phosphatases, and by rapid internalization and degradation of the receptor. Activated KIT promotes phosphorylation of the protein phosphatases PTPN6/SHP-1 and PTPRU, and of the transcription factors STAT1, STAT3, STAT5A and STAT5B. Promotes phosphorylation of PIK3R1, CBL, CRK (isoform Crk-II), LYN, MAPK1/ERK2 and/or MAPK3/ERK1, PLCG1, SRC and SHC1. In Canis lupus familiaris (Dog), this protein is Mast/stem cell growth factor receptor Kit (KIT).